The following is a 198-amino-acid chain: Ribosome maturation factor RimM (198 aa).

A disordered region spans residues 1–21 (MPPPTASTPDDSADPGPDFAD). One can recognise a PRC barrel domain in the interval 122–195 (DDELFADDLV…RIVVRPIDGL (74 aa)).

Belongs to the RimM family. In terms of assembly, binds ribosomal protein uS19.

It is found in the cytoplasm. Functionally, an accessory protein needed during the final step in the assembly of 30S ribosomal subunit, possibly for assembly of the head region. Essential for efficient processing of 16S rRNA. May be needed both before and after RbfA during the maturation of 16S rRNA. It has affinity for free ribosomal 30S subunits but not for 70S ribosomes. In Salinibacter ruber (strain DSM 13855 / M31), this protein is Ribosome maturation factor RimM.